The sequence spans 373 residues: tRNA-specific 2-thiouridylase MnmA (373 aa).

ATP is bound by residues Gly-12–Ser-19 and Met-38. The tract at residues Asn-98–Asp-100 is interaction with target base in tRNA. The Nucleophile role is filled by Cys-103. Cysteines 103 and 200 form a disulfide. ATP is bound at residue Gly-127. The tract at residues Lys-150–Gln-152 is interaction with tRNA. The Cysteine persulfide intermediate role is filled by Cys-200. The interaction with tRNA stretch occupies residues Arg-312–Tyr-313.

The protein belongs to the MnmA/TRMU family.

The protein localises to the cytoplasm. It catalyses the reaction S-sulfanyl-L-cysteinyl-[protein] + uridine(34) in tRNA + AH2 + ATP = 2-thiouridine(34) in tRNA + L-cysteinyl-[protein] + A + AMP + diphosphate + H(+). Functionally, catalyzes the 2-thiolation of uridine at the wobble position (U34) of tRNA, leading to the formation of s(2)U34. The polypeptide is tRNA-specific 2-thiouridylase MnmA (Streptococcus pneumoniae (strain JJA)).